Here is a 962-residue protein sequence, read N- to C-terminus: MSNTTVEQFAAELKRPVEDLLKQLKEAGVSKNSGSDSLTLDDKQLLNAYLTKKNGSNGGTISIRRTKTEVSTVDGVKVETRKRGRTVNIPSAEELAAQVKAAQTQAAPVRPEQTAEDAAKARAEAAARAEARAKAEAEAAKLKAAKAGNKAKPAAQKPTEAKAETAPVAAETKPAEESKAEKAQADKMPSKKPAEPKEKAAKPKHERNGKGKDAKKPAKPAAPAVPQPVVSAEEQAQRDEEARRAAALRAHQEALLKEKQERQARREAMKQQAEQQAKAAQEAKTGRQRPAKPAEKPQAAAPALENKPVNPAKAKKENRRNRDDEGQGRNAKGKGGKGGRDRNNARNGDDERVRGGKKGKKLKLEPNQHAFQAPTEPVVHEVLVPETITVADLAHKMAVKGVEVVKALMKMGMMVTINQSIDQDTALIVVEELGHIGKPAAADDPEAFLDEGAEAVEAEALPRPPVVTVMGHVDHGKTSLLDYIRRTKVVQGEAGGITQHIGAYHVETPRGVITFLDTPGHEAFTAMRARGAKATDIVILVVAADDGVMPQTIEAIAHAKAAGVPMVVAVNKIDKEAANPERIRQELTAHEVVPDEWGGDVQFIDVSAKKGLNIDALLEAVLLEAEVLELTAPVDAPAKGIIVEARLDKGRGAVATLLVQSGTLKKGDMLLAGTAFGKIRAMVDENGKSITEASPSIPVEILGLSDVPNAGEDAMVLADEKKAREIALFRQGKYRDVRLAKQQAAKLENMFNNMGENQAQSLSVIIKADVQGSYEALAGSLKKLSTDEVKVNVLHSGVGGITESDVNLAIASGAFIIGFNVRADASSRKLAENENVEIRYYNIIYDAIDDVKAAMSGMLSPEEKEQVTGTVEIRQVISVSKVGNIAGCMVTDGVVKRDSHVRLIRNNVVIHTGELASLKRYKDDVKEVRMGFECGLMLKGYNEIMEGDQLECFDIVEVARTL.

Residues Val-99–Glu-365 form a disordered region. Over residues Asp-117–Lys-141 the composition is skewed to basic and acidic residues. A compositionally biased stretch (low complexity) spans Ala-145–Ala-155. Residues Lys-173–Lys-216 show a composition bias toward basic and acidic residues. The segment covering Lys-219–Glu-234 has biased composition (low complexity). Basic and acidic residues predominate over residues Gln-235 to Met-269. A compositionally biased stretch (low complexity) spans Lys-270–Ala-283. A compositionally biased stretch (basic and acidic residues) spans Gly-338–Arg-354. Residues Pro-462–Thr-631 form the tr-type G domain. Residues Gly-471–Thr-478 are G1. Gly-471–Thr-478 contacts GTP. The segment at Gly-496–His-500 is G2. The interval Asp-517–Gly-520 is G3. GTP-binding positions include Asp-517–His-521 and Asn-571–Asp-574. Residues Asn-571–Asp-574 form a G4 region. Residues Ser-607–Lys-609 are G5.

This sequence belongs to the TRAFAC class translation factor GTPase superfamily. Classic translation factor GTPase family. IF-2 subfamily.

It is found in the cytoplasm. Functionally, one of the essential components for the initiation of protein synthesis. Protects formylmethionyl-tRNA from spontaneous hydrolysis and promotes its binding to the 30S ribosomal subunits. Also involved in the hydrolysis of GTP during the formation of the 70S ribosomal complex. The chain is Translation initiation factor IF-2 from Neisseria meningitidis serogroup C (strain 053442).